The primary structure comprises 253 residues: uncharacterized protein (253 aa).

The interval 211–235 is disordered; sequence DEPEPAQPTLTVPSAQPVSNRRGKP. Over residues 218 to 229 the composition is skewed to polar residues; that stretch reads PTLTVPSAQPVS.

This is an uncharacterized protein from Mycobacterium tuberculosis (strain CDC 1551 / Oshkosh).